Here is a 1027-residue protein sequence, read N- to C-terminus: LLGL scribble cell polarity complex component 2 (1027 aa).

WD repeat units lie at residues 36–69, 76–117, 132–169, 193–227, 233–268, 282–324, 332–366, 388–464, 508–583, and 592–653; these read SALGYSPSLRILAIGTRSGAVKLYGAPGVEFMGL, VLQI…EESF, VTEILPHSSGELLYLGTESGNVFVVQLPGFRTLHDRTI, ALQEHPRDPNQILIGYSRGLVVIWDLQGSRALSHF, LENASWQRDGCLIVTCHSDGSHCQWPVSSDTQNPEP, AITK…GQQT, VIDFTVLSEADPAAAFDDPYALVVLAEEELVVIDL, TCSH…YKLS, QKIF…FVLV, and TSLA…LRQS. At Ser-653 the chain carries Phosphoserine. The segment covering 654–669 has biased composition (basic residues); the sequence is FRRMRRSRVSSHKRRP. Positions 654–678 are disordered; that stretch reads FRRMRRSRVSSHKRRPGGPTGEAQA. WD repeat units follow at residues 715–771, 780–832, 837–890, and 904–927; these read VRTL…KEIQ, GILV…VSAK, LTAL…VRYS, and VFTKYGQGFYLISPSEFERFSLST. The segment at 940–981 is disordered; the sequence is TKAKKHNRPSNGNGTGLKMTSSGHVRNSKSQSDGDEKKPGPV. Residues 957-970 are compositionally biased toward polar residues; that stretch reads KMTSSGHVRNSKSQ. Phosphoserine occurs at positions 971 and 1022.

This sequence belongs to the WD repeat L(2)GL family. As to quaternary structure, interacts with GPSM2/LGN, PRKCI/aPKC and PARD6B/Par-6. The complex is enhanced during mitosis. Interacts with DCAF1. Phosphorylated at Ser-653 by PRKCI. Phosphorylation is enhanced during cell polarization induced by calcium. Phosphorylation may occur during the cell-cell contact-induced cell polarization and may contribute to the segregation of LLGL2 from the PRKCI/aPKC and PARD6B/Par-6 complex.

The protein localises to the cytoplasm. Its function is as follows. Part of a complex with GPSM2/LGN, PRKCI/aPKC and PARD6B/Par-6, which may ensure the correct organization and orientation of bipolar spindles for normal cell division. This complex plays roles in the initial phase of the establishment of epithelial cell polarity. This is LLGL scribble cell polarity complex component 2 (Llgl2) from Mus musculus (Mouse).